Here is a 457-residue protein sequence, read N- to C-terminus: D(1B) dopamine receptor (457 aa).

At 1 to 41 the chain is on the extracellular side; that stretch reads MYQPFQHLDSDQVASWQSPEMLMNKSVSRESQRRKELVAGQ. A glycan (N-linked (GlcNAc...) asparagine) is linked at Asn24. Residues 42 to 67 form a helical membrane-spanning segment; that stretch reads IVTGSLLLLLIFWTLFGNILVCTAVM. Over 68–78 the chain is Cytoplasmic; that stretch reads RFRHLRSRVTN. A helical membrane pass occupies residues 79-105; that stretch reads IFIVSLAVSDLLVALLVMPWKAVAEVA. The Extracellular segment spans residues 106–114; it reads GHWPFGAFC. Cys114 and Cys199 are oxidised to a cystine. Residues 115–137 form a helical membrane-spanning segment; the sequence is DIWVAFDIMCSTASILNLCVISV. Residues 138-156 are Cytoplasmic-facing; the sequence is DRYWAISSPFRYERKMTQR. The chain crosses the membrane as a helical span at residues 157-181; that stretch reads VALLMISTAWALSVLISFIPVQLSW. At 182 to 205 the chain is on the extracellular side; it reads HKSETEDHLLSNHSTGNCDSSLNR. Residues 206-231 traverse the membrane as a helical segment; it reads TYAISSSLISFYIPVAIMIVTYTRIY. At 232 to 282 the chain is on the cytoplasmic side; the sequence is RIAQIQIKRISTLERAAEHAQSCRSNRVDSCSRHHQTSLRTSIKKETKVLK. The chain crosses the membrane as a helical span at residues 283–309; it reads TLSIIMGVFVCCWLPFFILNCMVPFCD. The Extracellular portion of the chain corresponds to 310-326; that stretch reads RSPGHPQAGLPCVSETT. The chain crosses the membrane as a helical span at residues 327–351; sequence FDIFVWFGWANSSLNPIIYAFNADF. The Cytoplasmic segment spans residues 352–457; that stretch reads RKVFSSLLGC…ITPSMSNGIH (106 aa). Cys361 carries S-palmitoyl cysteine lipidation.

It belongs to the G-protein coupled receptor 1 family. In terms of tissue distribution, brain and kidney.

Its subcellular location is the cell membrane. In terms of biological role, dopamine receptor whose activity is mediated by G proteins which activate adenylyl cyclase. The protein is D(1B) dopamine receptor (drd5) of Xenopus laevis (African clawed frog).